A 319-amino-acid polypeptide reads, in one-letter code: ATP-dependent 6-phosphofructokinase (319 aa).

Residue G11 participates in ATP binding. Residue 21 to 25 (RAVVR) coordinates ADP. Residues 72–73 (RY) and 102–105 (GDGS) each bind ATP. D103 provides a ligand contact to Mg(2+). 125–127 (TID) is a substrate binding site. D127 (proton acceptor) is an active-site residue. R154 lines the ADP pocket. Residues R162 and 169–171 (MGR) each bind substrate. ADP-binding positions include 185 to 187 (GAE), R211, and 213 to 215 (KKH). Residues E222, R243, and 249–252 (HVQR) each bind substrate.

This sequence belongs to the phosphofructokinase type A (PFKA) family. ATP-dependent PFK group I subfamily. Prokaryotic clade 'B1' sub-subfamily. In terms of assembly, homotetramer. Requires Mg(2+) as cofactor.

It is found in the cytoplasm. The catalysed reaction is beta-D-fructose 6-phosphate + ATP = beta-D-fructose 1,6-bisphosphate + ADP + H(+). The protein operates within carbohydrate degradation; glycolysis; D-glyceraldehyde 3-phosphate and glycerone phosphate from D-glucose: step 3/4. Allosterically activated by ADP and other diphosphonucleosides, and allosterically inhibited by phosphoenolpyruvate. Its function is as follows. Catalyzes the phosphorylation of D-fructose 6-phosphate to fructose 1,6-bisphosphate by ATP, the first committing step of glycolysis. This chain is ATP-dependent 6-phosphofructokinase, found in Listeria innocua serovar 6a (strain ATCC BAA-680 / CLIP 11262).